The sequence spans 177 residues: Large ribosomal subunit protein uL6 (177 aa).

The protein belongs to the universal ribosomal protein uL6 family. Part of the 50S ribosomal subunit.

In terms of biological role, this protein binds to the 23S rRNA, and is important in its secondary structure. It is located near the subunit interface in the base of the L7/L12 stalk, and near the tRNA binding site of the peptidyltransferase center. The chain is Large ribosomal subunit protein uL6 from Janthinobacterium sp. (strain Marseille) (Minibacterium massiliensis).